The primary structure comprises 1234 residues: Complement factor H (1234 aa).

A signal peptide spans 1–18 (MRLSARIIWLILWTVCAA). Sushi domains follow at residues 19–82 (EDCK…ICRK), 83–143 (KPCG…LCEV), 144–207 (VKCL…RCVE), 208–264 (ILCT…FCEE), 265–322 (KRCS…RCTL), 324–386 (PCEF…VPCV), 387–444 (RKCV…KCIR), 446–507 (KTCS…SCIK), 508–566 (SCDM…SCYE), 567–624 (RECS…TCKG), 627–685 (ASCA…VCIE), 688–745 (RTCG…KCVA), 750–804 (EKCR…NCTS), 806–863 (TSCP…RCIE), 865–933 (IPCS…RCVG), 934–991 (LPCG…KCIK), 992–1050 (TDCD…VCKD), 1051–1109 (NSCV…KCRD), 1112–1170 (GKCG…TCLH), and 1171–1234 (ACVI…PTCV). Intrachain disulfides connect Cys21/Cys66, Cys52/Cys80, Cys85/Cys129, Cys114/Cys141, Cys146/Cys192, Cys178/Cys205, Cys210/Cys251, Cys237/Cys262, Cys267/Cys309, Cys294/Cys320, Cys325/Cys374, Cys357/Cys385, Cys389/Cys431, Cys416/Cys442, Cys448/Cys494, Cys477/Cys505, Cys509/Cys553, Cys536/Cys564, Cys569/Cys610, Cys597/Cys622, Cys629/Cys672, Cys658/Cys683, Cys690/Cys732, Cys718/Cys743, Cys752/Cys791, Cys780/Cys802, Cys808/Cys850, Cys836/Cys861, Cys867/Cys920, Cys906/Cys931, Cys936/Cys978, Cys964/Cys989, Cys994/Cys1037, Cys1023/Cys1048, Cys1053/Cys1096, Cys1082/Cys1107, Cys1114/Cys1157, Cys1143/Cys1168, Cys1172/Cys1223, and Cys1206/Cys1233. N-linked (GlcNAc...) asparagine glycosylation is found at Asn676, Asn721, Asn773, and Asn801. Residues 872-896 (TIEHGSINLPRSSEERRDSIESSSH) form a disordered region. Positions 883–896 (SSEERRDSIESSSH) are enriched in basic and acidic residues. N-linked (GlcNAc...) asparagine glycans are attached at residues Asn1030 and Asn1061. Phosphoserine is present on Ser1198. Asn1225 is a glycosylation site (N-linked (GlcNAc...) asparagine).

In terms of assembly, homodimer. Also forms homooligomers. Interacts with complement protein C3b; this interaction inhibits complement activation. Interacts with complement protein C3d. Interacts with CR3/ITGAM; this interaction mediates adhesion of neutrophils to pathogens leading to pathogen clearance. Post-translationally, sulfated on tyrosine residues. CFH is one of the most abundant complement components in blood where the liver is the major source of CFH protein in vivo. in addition, CFH is secreted by additional cell types including monocytes, fibroblasts, or endothelial cells.

Its subcellular location is the secreted. Its function is as follows. Glycoprotein that plays an essential role in maintaining a well-balanced immune response by modulating complement activation. Acts as a soluble inhibitor of complement, where its binding to self markers such as glycan structures prevents complement activation and amplification on cell surfaces. Accelerates the decay of the complement alternative pathway (AP) C3 convertase C3bBb, thus preventing local formation of more C3b, the central player of the complement amplification loop. As a cofactor of the serine protease factor I, CFH also regulates proteolytic degradation of already-deposited C3b. In addition, mediates several cellular responses through interaction with specific receptors. For example, interacts with CR3/ITGAM receptor and thereby mediates the adhesion of human neutrophils to different pathogens. In turn, these pathogens are phagocytosed and destroyed. The chain is Complement factor H (Cfh) from Mus musculus (Mouse).